We begin with the raw amino-acid sequence, 687 residues long: Tripartite terminase subunit 3 (687 aa).

Positions 67–91 (HHPATPTSANPDVGTPRPSEDNVPA) are disordered. The Walker A motif motif lies at 221–228 (IPRRHGKT). The Walker B motif motif lies at 316 to 321 (LLYVDE). Catalysis depends on glutamate 321, which acts as the For ATPase activity. Residues aspartate 476, glutamate 550, and aspartate 662 each act as for nuclease activity in the active site.

It belongs to the herpesviridae TRM3 protein family. As to quaternary structure, interacts with the terminase subunits TRM1 and TRM2. Interacts with portal protein.

It is found in the host nucleus. Component of the molecular motor that translocates viral genomic DNA in empty capsid during DNA packaging. Forms a tripartite terminase complex together with TRM1 and TRM2 in the host cytoplasm. Once the complex reaches the host nucleus, it interacts with the capsid portal vertex. This portal forms a ring in which genomic DNA is translocated into the capsid. TRM3 carries an RNase H-like nuclease activity that plays an important role for the cleavage of concatemeric viral DNA into unit length genomes. The polypeptide is Tripartite terminase subunit 3 (Human herpesvirus 8 type P (isolate GK18) (HHV-8)).